The following is a 157-amino-acid chain: Phosphopantetheine adenylyltransferase (157 aa).

T10 serves as a coordination point for substrate. ATP contacts are provided by residues 10-11 (TF) and H18. 3 residues coordinate substrate: K42, L74, and R88. ATP-binding positions include 89-91 (GLR), E99, and 124-130 (NAFISSS).

It belongs to the bacterial CoaD family. As to quaternary structure, homohexamer. Mg(2+) is required as a cofactor.

Its subcellular location is the cytoplasm. The catalysed reaction is (R)-4'-phosphopantetheine + ATP + H(+) = 3'-dephospho-CoA + diphosphate. The protein operates within cofactor biosynthesis; coenzyme A biosynthesis; CoA from (R)-pantothenate: step 4/5. Functionally, reversibly transfers an adenylyl group from ATP to 4'-phosphopantetheine, yielding dephospho-CoA (dPCoA) and pyrophosphate. The protein is Phosphopantetheine adenylyltransferase of Helicobacter pylori (strain P12).